Reading from the N-terminus, the 555-residue chain is Glutamate--tRNA ligase (555 aa).

The 'HIGH' region motif lies at 103–113; sequence PNPSGPLHIGH.

The protein belongs to the class-I aminoacyl-tRNA synthetase family. Glutamate--tRNA ligase type 2 subfamily.

Its subcellular location is the cytoplasm. The catalysed reaction is tRNA(Glu) + L-glutamate + ATP = L-glutamyl-tRNA(Glu) + AMP + diphosphate. Catalyzes the attachment of glutamate to tRNA(Glu) in a two-step reaction: glutamate is first activated by ATP to form Glu-AMP and then transferred to the acceptor end of tRNA(Glu). This is Glutamate--tRNA ligase from Methanobrevibacter smithii (strain ATCC 35061 / DSM 861 / OCM 144 / PS).